The following is a 119-amino-acid chain: Fluoride-specific ion channel FluC (119 aa).

4 helical membrane passes run 5-25 (IIPLSIGAALGATARWLLNLA), 30-50 (IPPATGNLFANWIGAFLIGIF), 59-79 (WKLLLITGFLGSLTTLSGFSL), and 97-117 (IFLHTAGSLLLTWLGLKIGAA). Residues G69 and T72 each contribute to the Na(+) site.

The protein belongs to the fluoride channel Fluc/FEX (TC 1.A.43) family.

Its subcellular location is the cell inner membrane. The enzyme catalyses fluoride(in) = fluoride(out). Its activity is regulated as follows. Na(+) is not transported, but it plays an essential structural role and its presence is essential for fluoride channel function. Fluoride-specific ion channel. Important for reducing fluoride concentration in the cell, thus reducing its toxicity. This chain is Fluoride-specific ion channel FluC, found in Neisseria meningitidis serogroup B (strain ATCC BAA-335 / MC58).